Consider the following 769-residue polypeptide: Transferrin receptor protein 1 (769 aa).

Residues 1–70 (MMDQARSAFS…KPKRFNGFIC (70 aa)) lie on the Cytoplasmic side of the membrane. The segment at 1-70 (MMDQARSAFS…KPKRFNGFIC (70 aa)) is mediates interaction with SH3BP4. Phosphoserine occurs at positions 10 and 19. At Tyr-20 the chain carries Phosphotyrosine. The Endocytosis signal signature appears at 20–23 (YTRF). At Thr-21 the chain carries Phosphothreonine. Ser-24 is subject to Phosphoserine. The short motif at 61 to 64 (KPKR) is the Stop-transfer sequence element. Residue Cys-70 is the site of S-palmitoyl cysteine attachment. Residues 71-91 (YGTIAIILFFLIGFMIGYLGY) form a helical; Signal-anchor for type II membrane protein membrane-spanning segment. Topologically, residues 92–769 (CKRVEAKSEC…GDIWDIDNEF (678 aa)) are extracellular. Thr-107 carries O-linked (GalNAc...) threonine glycosylation. The PA domain occupies 232-322 (SKAATVTGRL…GTGDPYTPGF (91 aa)). Asn-260 and Asn-326 each carry an N-linked (GlcNAc...) asparagine glycan. A ligand-binding region spans residues 578 to 769 (TMDVYEKLIQ…GDIWDIDNEF (192 aa)). The Cell attachment site motif lies at 655–657 (RGD). Asn-731 and Asn-736 each carry an N-linked (GlcNAc...) asparagine glycan.

The protein belongs to the peptidase M28 family. M28B subfamily. In terms of assembly, homodimer; disulfide-linked. Binds one transferrin molecule per subunit. Interacts with SH3BP4. Homodimer; disulfide-linked. Binds one transferrin or HFE molecule per subunit. Binds the HLA class II histocompatibility antigen, DR1. Interacts with SH3BP3. Interacts with STEAP3; facilitates TFRC endocytosis in erythroid precursor cells. Post-translationally, stearoylated by ZDHHC6 which inhibits TFRC-mediated activation of the JNK pathway and promotes mitochondrial fragmentation. Stearoylation does not affect iron uptake. In terms of processing, N- and O-glycosylated, phosphorylated and palmitoylated.

Its subcellular location is the cell membrane. It localises to the melanosome. In terms of biological role, cellular uptake of iron occurs via receptor-mediated endocytosis of ligand-occupied transferrin receptor into specialized endosomes. Endosomal acidification leads to iron release. The apotransferrin-receptor complex is then recycled to the cell surface with a return to neutral pH and the concomitant loss of affinity of apotransferrin for its receptor. Transferrin receptor is necessary for development of erythrocytes and the nervous system. Positively regulates T and B cell proliferation through iron uptake. Acts as a lipid sensor that regulates mitochondrial fusion by regulating activation of the JNK pathway. When dietary levels of stearate (C18:0) are low, promotes activation of the JNK pathway, resulting in HUWE1-mediated ubiquitination and subsequent degradation of the mitofusin MFN2 and inhibition of mitochondrial fusion. When dietary levels of stearate (C18:0) are high, TFRC stearoylation inhibits activation of the JNK pathway and thus degradation of the mitofusin MFN2. Mediates uptake of NICOL1 into fibroblasts where it may regulate extracellular matrix production. This Felis catus (Cat) protein is Transferrin receptor protein 1 (TFRC).